We begin with the raw amino-acid sequence, 120 residues long: Ragulator complex protein LAMTOR4 homolog (120 aa).

Residues 93–120 (QNGVTTTTSSSSSNSVYNDASDSGAVLA) are disordered. Residues 97-107 (TTTTSSSSSNS) are compositionally biased toward low complexity.

This sequence belongs to the LAMTOR4 family. As to quaternary structure, part of the Ragulator complex composed of Lamtor3, Lamtor2, CG14184, CG14812, and Lamtor4.

It is found in the lysosome. Its function is as follows. Regulator of the TOR pathway, a signaling cascade that promotes cell growth in response to growth factors, energy levels, and amino acids. As part of the Ragulator complex, may activate the TOR signaling cascade in response to amino acids. The protein is Ragulator complex protein LAMTOR4 homolog of Drosophila melanogaster (Fruit fly).